The sequence spans 899 residues: MVSLSNQTRFSFHPNNLVVSEKRRLGISGVNFPRKIKLKITCFAAERPRQEKQKKKSQSQSTSDAEAGVDPVGFLTRLGIADRIFAQFLRERHKALKDLKDEIFKRHFDFRDFASGFELLGMHRHMEHRVDFMDWGPGSRYGAIIGDFNGWSPTENAAREGLFGHDDYGYWFIILEDKLREGEEPDELYFQQYNYVDDYDKGDSGVSAEEIFQKANDEYWEPGEDRFIKNRFEVPAKLYEQMFGPNSPQTLEELGDIPDAETRYKQWKEEHKDDPPSNLPPCDIIDKGQGKPYDIFNVVTSPEWTKKFYEKEPPIPYWLETRKGRKAWLQKYIPAVPHGSKYRLYFNTPDGPLERVPAWATYVQPEDEGKQAYAIHWEPSPEAAYKWKYSKPKVPESLRIYECHVGISGSEPKVSTFEEFTKKVLPHVKRAGYNAIQLIGVPEHKDYFTVGYRVTNFFAASSRYGTPDDFKRLVDEAHGLGLLVFLDIVHSYAAADQMVGLSLFDGSNDCYFHYGKRGHHKHWGTRMFKYGDLDVLHFLISNLNWWITEYQVDGYQFHSLASMIYTHNGFASFNNDLDDYCNQYVDRDALMYLILANEILHVQHPNIITIAEDATYYPGLCEPVSQGGLGFDYYVNLSASEMWVSLLDNVPDNEWSMSKIVSTLVANKEYADKMLSYAENHNQSISGGRSFAEILFGGVDNGSPGGKELLDRGISLHKMIRLITFTSGGRAYLNFMGNEFGHPERVEFPTQSNNFSFSLANRRWDLLESGVHHHLFSFDKELMDLDKSKGILSRGLPSIHHVNDANMVISFSRGPFLFIFNFHPSNSYEKYDVGVEEAGEYTMILNSDEVKYGGQGIVTEDHYLQRSISKRIDGQRNCLEVFLPSRTAQVYKLTRILRI.

The N-terminal 49 residues, M1–R49, are a transit peptide targeting the chloroplast. The interval R47 to A67 is disordered. E612 acts as the Proton donor in catalysis.

Belongs to the glycosyl hydrolase 13 family. GlgB subfamily. In terms of assembly, monomer. As to expression, mostly expressed in flowers and inflorescence, and, to a lower extent, in seedlings, roots, stems, leaves, siliques and seeds.

It localises to the plastid. Its subcellular location is the chloroplast stroma. The protein localises to the amyloplast. It carries out the reaction Transfers a segment of a (1-&gt;4)-alpha-D-glucan chain to a primary hydroxy group in a similar glucan chain.. It participates in glycan biosynthesis; starch biosynthesis. Its function is as follows. Catalyzes the formation of the alpha-1,6-glucosidic linkages in starch by scission of a 1,4-alpha-linked oligosaccharide from growing alpha-1,4-glucan chains and the subsequent attachment of the oligosaccharide to the alpha-1,6 position. Essential during embryogenesis. In Arabidopsis thaliana (Mouse-ear cress), this protein is 1,4-alpha-glucan-branching enzyme 3, chloroplastic/amyloplastic (SBE3).